The following is a 1410-amino-acid chain: Slit homolog 1 protein (1410 aa).

The N-terminal stretch at 1-16 (MLICFIFILLIPESAT) is a signal peptide. Residues 17-43 (CPAECVCVDRTVSCVGQQLTEVPQNIP) form the LRRNT 1 domain. 20 LRR repeats span residues 22 to 42 (VCVD…PQNI), 43 to 66 (PNDT…DFSS), 67 to 90 (LMNL…SFSS), 91 to 114 (LVFL…VFQN), 116 to 138 (LKLT…QLQG), 140 to 162 (EFLE…VISS), 163 to 186 (WVSL…SNAR), 219 to 242 (TVCA…FMTC), 286 to 309 (PPST…SFKN), 310 to 333 (LKNL…AFLG), 335 to 357 (HNLH…TFEG), 358 to 381 (LGSL…TFDH), 383 to 405 (PKLS…TFQN), 407 to 430 (TSLS…WLAQ), 442 to 465 (ARCE…KFKC), 489 to 510 (CDCY…PTSI), 511 to 535 (PRFA…NIHV), 536 to 559 (LENL…SFEK), 561 to 583 (SKLR…VLDE), and 585 to 607 (SNLE…FFNK). Residues 195-243 (NPWNCDCRLRWMRKWLEKAEGQNKTVCATPLNLQGSSIEILQDKFMTCS) enclose the LRRCT 1 domain. An LRRNT 2 domain is found at 259–286 (ICPLPCTCTGTTVDCRDSGLTYVPTNLP). An LRRCT 2 domain is found at 417–466 (NPLICDCNLQWLAQINLQKNIETSGARCEQPKRLRKKKFATLPPNKFKCK). The LRRNT 3 domain occupies 484–511 (ICPTQCDCYGTTVDCNKRGLNTIPTSIP). An LRRCT 3 domain is found at 619–671 (NDLLCDCRILPLMSWLRSNSSHSIDIPPCQQFQYSDNESDKQRCAAFPEETCS). The region spanning 677-703 (CPPKCSCLDRVVRCSNKNLTSFPSRIP) is the LRRNT 4 domain. 6 LRR repeats span residues 681–703 (CSCL…SRIP), 704–726 (FDTT…DLNR), 727–750 (LYSL…TFSN), 752–774 (TRLS…AFNG), 775–798 (LNAL…AFSN), and 800–823 (TSIT…WFSK). In terms of domain architecture, LRRCT 4 spans 810 to 859 (NSLYCDCNMAWFSKWIKSKFIEAGIARCEYPNTVSNQLLLTAQPYQFTCD). EGF-like domains are found at residues 871–906 (DLCL…VHCE) and 908–945 (QIDA…DYCE). Intrachain disulfides connect Cys873-Cys884, Cys878-Cys894, Cys896-Cys905, Cys912-Cys923, Cys917-Cys933, Cys935-Cys944, Cys951-Cys962, Cys956-Cys971, Cys973-Cys982, Cys989-Cys1002, Cys996-Cys1011, Cys1013-Cys1022, Cys1029-Cys1040, Cys1034-Cys1049, Cys1051-Cys1060, Cys1076-Cys1086, Cys1081-Cys1097, and Cys1099-Cys1108. Positions 947-983 (NIDDCVNSKCENGGKCVDLINSYRCDCPMEYEGKHCE) constitute an EGF-like 1; calcium-binding domain. The EGF-like 3 domain occupies 985 to 1023 (KLEYCTKKLNPCENNGKCIPINGSYSCMCSPGFTGNNCE). Residues 1025–1061 (NIDDCKNVECQNGGSCVDGILSYDCLCRPGYAGQYCE) enclose the EGF-like 2; calcium-binding domain. One can recognise an EGF-like 4 domain in the interval 1072–1109 (KTDACQQSACGQGECVASQNSSDFTCKCHEGFSGPSCD). The 174-residue stretch at 1112-1285 (MSVGFKNPGA…LENVNTEQSC (174 aa)) folds into the Laminin G-like domain. The stretch at 1197-1221 (TSERKCFLQIDKNPVQIVENSGKSD) is one LRR 27 repeat. Intrachain disulfides connect Cys1259/Cys1285, Cys1292/Cys1302, Cys1297/Cys1314, Cys1316/Cys1325, Cys1332/Cys1368, Cys1346/Cys1382, Cys1357/Cys1398, and Cys1361/Cys1400. Residues 1288-1326 (TVNFCAGIDCGNGKCTNNALSPKGYMCQCDSHFSGEHCD) form the EGF-like 5 domain. Residues 1332–1406 (CDKQKFRRHH…QCQCEPTKSV (75 aa)) enclose the CTCK domain.

As to quaternary structure, interacts with eva-1.

It is found in the secreted. Its function is as follows. Functions as a ligand for sax-3 receptor during larval development. Acts via the sax-3/Robo receptor to direct ventral axon guidance and guidance at the midline during embryonic development. This is Slit homolog 1 protein (slt-1) from Caenorhabditis elegans.